Consider the following 277-residue polypeptide: MDKALVSPIEDAFARYSTLTVEEIEDSIRPTVNRVIDGLETGAFRVAEPDNHGGWKVNEWLKKAVLLYFRVHDTMIVDAQPAPFWDKIESRFSGYDAAKFRAAGVRVVPGAIARRGSYFGKDVVLMPSFTNIGAYVGEGTMIDTWATVGSCAQLGAHCHLSGGAAIGGVLEPLQASPAIIEDHCFIGARSEIVEGVIVGHHSVISMGVFISQSTRIYNRATGEISYGYVPPYSVVVSGQLPAKDGTHSLYCAVIVKQVDEKTRAKTSINELLRGFAD.

Residues Arg-106 and Asp-143 each contribute to the substrate site.

It belongs to the transferase hexapeptide repeat family. As to quaternary structure, homotrimer.

The protein localises to the cytoplasm. It catalyses the reaction (S)-2,3,4,5-tetrahydrodipicolinate + succinyl-CoA + H2O = (S)-2-succinylamino-6-oxoheptanedioate + CoA. It participates in amino-acid biosynthesis; L-lysine biosynthesis via DAP pathway; LL-2,6-diaminopimelate from (S)-tetrahydrodipicolinate (succinylase route): step 1/3. The sequence is that of 2,3,4,5-tetrahydropyridine-2,6-dicarboxylate N-succinyltransferase from Xylella fastidiosa (strain 9a5c).